The sequence spans 352 residues: MPECWDGEHDIETPYGLLHVVIRGSPKGNRPAILTYHDVGLNHKLCFNTFFNFEDMQEITKHFVVCHVDAPGQQVGASQFPQGYQFPSMEQLAAMLPSVVQHFGFKYVIGIGVGAGAYVLAKFALIFPDLVEGLVLVNIDPNGKGWIDWAATKLSGLTSTLPDTVLSHLFSQEELVNNTELVQSYRQQIGNVVNQANLQLFWNMYNSRRDLDINRPGTVPNAKTLRCPVMLVVGDNAPAEDGVVECNSKLDPTTTTFLKMADSGGLPQVTQPGKLTEAFKYFLQGMGYIAYLKDRRLSGGAVPSASMTRLARSRTASLTSASSVDGSRPQACTHSESSEGLGQVNHTMEVSC.

3 positions are modified to phosphoserine: serine 298, serine 317, and serine 323. The span at 314 to 323 shows a compositional bias: low complexity; the sequence is RTASLTSASS. Positions 314 to 352 are disordered; sequence RTASLTSASSVDGSRPQACTHSESSEGLGQVNHTMEVSC. Over residues 330–352 the composition is skewed to polar residues; that stretch reads QACTHSESSEGLGQVNHTMEVSC.

The protein belongs to the NDRG family. Post-translationally, phosphorylated in an aortic smooth muscle cell line, following PDGF treatment. As to expression, expressed predominantly in brain and heart (at protein level). In the brain, detected in astrocytes. Isoform 1 and isoform 2 are only expressed in brain. Isoform 3 is expressed in both heart and brain. Up-regulated in glioblastoma multiforme cells.

The protein resides in the cytoplasm. Its subcellular location is the cytosol. Functionally, contributes to the maintenance of intracerebral BDNF levels within the normal range, which is necessary for the preservation of spatial learning and the resistance to neuronal cell death caused by ischemic stress. May enhance growth factor-induced ERK1 and ERK2 phosphorylation, including that induced by PDGF and FGF. May attenuate NGF-promoted ELK1 phosphorylation in a microtubule-dependent manner. The chain is Protein NDRG4 (NDRG4) from Homo sapiens (Human).